A 606-amino-acid chain; its full sequence is NADH-ubiquinone oxidoreductase chain 5 (606 aa).

The next 16 membrane-spanning stretches (helical) occupy residues 4–24 (FPSLMLTSLLMLTLPIITTTI), 38–58 (NIISYAFITSLIPTMMFIHSG), 87–107 (MIFVPVALFVTWSIMEFSMWY), 114–134 (ITQFFKYLLMFLITMMILVTA), 140–160 (LFIGWEGVGIMSFLLISWWYG), 171–191 (AILYNRIGDIGFIMSMAWFLF), 213–233 (LMGLLLAATGKSAQFGLHPWL), 241–261 (TPVSALLHSSTMVVAGVFLLI), 273–293 (VQTFTLCLGAITTLFTAICAL), 301–320 (IIAFSTSSQLGLMIVTIGIN), 325–347 (AFLHICTHAFFKAMLFMCSGSII), 366–386 (MPFTSTSLIIGSLALTGMPFL), 409–429 (LLITLIATSLTAAYSTRMIFF), 457–477 (LLIGSIFAGFFISNNIYPTTI), 488–508 (LTALAVTILGFMMALELSLAT), and 583–603 (LIKLYFLSFLVTLTLSLLLLM).

It belongs to the complex I subunit 5 family. As to quaternary structure, core subunit of respiratory chain NADH dehydrogenase (Complex I) which is composed of 45 different subunits.

Its subcellular location is the mitochondrion inner membrane. The enzyme catalyses a ubiquinone + NADH + 5 H(+)(in) = a ubiquinol + NAD(+) + 4 H(+)(out). Functionally, core subunit of the mitochondrial membrane respiratory chain NADH dehydrogenase (Complex I) which catalyzes electron transfer from NADH through the respiratory chain, using ubiquinone as an electron acceptor. Essential for the catalytic activity and assembly of complex I. The polypeptide is NADH-ubiquinone oxidoreductase chain 5 (MT-ND5) (Ceratotherium simum (White rhinoceros)).